Consider the following 451-residue polypeptide: Arginine biosynthesis bifunctional protein ArgJ, mitochondrial (451 aa).

6 residues coordinate substrate: T180, K209, T220, E307, N446, and T451. Catalysis depends on T220, which acts as the Nucleophile.

The protein belongs to the ArgJ family. In terms of assembly, heterodimer of an alpha and a beta chain. Post-translationally, the alpha and beta chains are autoproteolytically processed from a single precursor protein within the mitochondrion.

Its subcellular location is the mitochondrion matrix. It carries out the reaction N(2)-acetyl-L-ornithine + L-glutamate = N-acetyl-L-glutamate + L-ornithine. It catalyses the reaction L-glutamate + acetyl-CoA = N-acetyl-L-glutamate + CoA + H(+). Its pathway is amino-acid biosynthesis; L-arginine biosynthesis; L-ornithine and N-acetyl-L-glutamate from L-glutamate and N(2)-acetyl-L-ornithine (cyclic): step 1/1. The protein operates within amino-acid biosynthesis; L-arginine biosynthesis; N(2)-acetyl-L-ornithine from L-glutamate: step 1/4. Functionally, catalyzes two activities which are involved in the cyclic version of arginine biosynthesis: the synthesis of acetylglutamate from glutamate and acetyl-CoA, and of ornithine by transacetylation between acetylornithine and glutamate. This is Arginine biosynthesis bifunctional protein ArgJ, mitochondrial from Fusarium vanettenii (strain ATCC MYA-4622 / CBS 123669 / FGSC 9596 / NRRL 45880 / 77-13-4) (Fusarium solani subsp. pisi).